Consider the following 1114-residue polypeptide: Transcriptional repressor NF-X1 (1114 aa).

Positions 9–26 (GTFKFNTDAAEFIPQERK) are interaction with PABPC1 and PABC4. Disordered stretches follow at residues 20-220 (FIPQ…CRKP), 232-287 (QRRY…PTKS), and 299-325 (KSSR…FPRG). 6 positions are modified to phosphoserine: serine 50, serine 81, serine 92, serine 126, serine 130, and serine 147. Polar residues-rich tracts occupy residues 72–103 (SYAS…NQPW) and 121–142 (LSEQ…SGTN). Composition is skewed to basic and acidic residues over residues 143 to 156 (PREH…KEVV), 185 to 202 (LRSE…DENT), 232 to 248 (QRRY…EGAR), and 304 to 315 (VNQEKTAVRRQD). At serine 320 the chain carries Phosphoserine. The RING-type; atypical zinc-finger motif lies at 352-403 (CMVCCELVQVTAPVWSCQSCFHVFHLNCIKKWARSPASHADGQSGWRCPACQ). NF-X1-type zinc fingers lie at residues 447 to 465 (CPHS…PCPA), 500 to 519 (CGQH…PCRI), 561 to 580 (CGSH…PCPR), 626 to 649 (CGSS…PCSR), 688 to 707 (CGRH…KCPL), 715 to 734 (CGLH…TCWQ), 826 to 848 (CGMH…ACKQ), and 857 to 878 (CGHP…ACKA). Residues 988 to 1056 (LKFVSDVEKE…KRNVVVTAVR (69 aa)) enclose the R3H domain. The interval 1071-1095 (ERETQTRPPPPIPHHRHQADKAPGS) is disordered.

This sequence belongs to the NFX1 family. As to quaternary structure, interacts with PABPC1 and PABPC4. In terms of tissue distribution, ubiquitously expressed, with highest levels in thymus.

It is found in the nucleus. Binds to the X-box motif of MHC class II genes and represses their expression. May play an important role in regulating the duration of an inflammatory response by limiting the period in which MHC class II molecules are induced by interferon-gamma. Together with PABPC1 or PABPC4, acts as a coactivator for TERT expression. Mediates E2-dependent ubiquitination. The sequence is that of Transcriptional repressor NF-X1 (Nfx1) from Mus musculus (Mouse).